Consider the following 413-residue polypeptide: Arginine biosynthesis bifunctional protein ArgJ 1 (413 aa).

Thr-154, Lys-180, Thr-191, Glu-277, Asn-408, and Thr-413 together coordinate substrate. Thr-191 functions as the Nucleophile in the catalytic mechanism.

The protein belongs to the ArgJ family. Heterotetramer of two alpha and two beta chains.

It is found in the cytoplasm. The enzyme catalyses N(2)-acetyl-L-ornithine + L-glutamate = N-acetyl-L-glutamate + L-ornithine. The catalysed reaction is L-glutamate + acetyl-CoA = N-acetyl-L-glutamate + CoA + H(+). Its pathway is amino-acid biosynthesis; L-arginine biosynthesis; L-ornithine and N-acetyl-L-glutamate from L-glutamate and N(2)-acetyl-L-ornithine (cyclic): step 1/1. The protein operates within amino-acid biosynthesis; L-arginine biosynthesis; N(2)-acetyl-L-ornithine from L-glutamate: step 1/4. Functionally, catalyzes two activities which are involved in the cyclic version of arginine biosynthesis: the synthesis of N-acetylglutamate from glutamate and acetyl-CoA as the acetyl donor, and of ornithine by transacetylation between N(2)-acetylornithine and glutamate. This chain is Arginine biosynthesis bifunctional protein ArgJ 1, found in Nostoc sp. (strain PCC 7120 / SAG 25.82 / UTEX 2576).